The chain runs to 258 residues: Tritrans,polycis-undecaprenyl-diphosphate synthase (geranylgeranyl-diphosphate specific) (258 aa).

The active site involves D37. A Mg(2+)-binding site is contributed by D37. Residues 38-41, H54, and 82-84 contribute to the substrate site; these read GNRR and STE. N85 (proton acceptor) is an active-site residue. Substrate-binding positions include F86, R88, R207, and 213–215; that span reads RIS. E226 contributes to the Mg(2+) binding site.

This sequence belongs to the UPP synthase family. Homodimer. Requires Mg(2+) as cofactor.

It carries out the reaction geranylgeranyl diphosphate + 7 isopentenyl diphosphate = tri-trans,hepta-cis-undecaprenyl diphosphate + 7 diphosphate. Its function is as follows. Catalyzes the sequential condensation of isopentenyl diphosphate (IPP) with geranylgeranyl diphosphate (GGPP) to yield (2Z,6Z,10Z,14Z,18Z,22Z,26Z,30E,34E,38E)-undecaprenyl diphosphate (tritrans,heptacis-UPP). It is probably the precursor of glycosyl carrier lipids. The chain is Tritrans,polycis-undecaprenyl-diphosphate synthase (geranylgeranyl-diphosphate specific) from Thermoplasma volcanium (strain ATCC 51530 / DSM 4299 / JCM 9571 / NBRC 15438 / GSS1).